The primary structure comprises 339 residues: Trace amine-associated receptor 1 (339 aa).

The Extracellular segment spans residues 1-24 (MMPFCHNIINISCVKNNWSNDVRA). 3 cysteine pairs are disulfide-bonded: cysteine 5-cysteine 178, cysteine 13-cysteine 88, and cysteine 96-cysteine 182. N-linked (GlcNAc...) asparagine glycosylation is found at asparagine 10 and asparagine 17. A helical membrane pass occupies residues 25–49 (SLYSLMVLIILTTLVGNLIVIVSIS). At 50–59 (HFKQLHTPTN) the chain is on the cytoplasmic side. The helical transmembrane segment at 60–81 (WLIHSMATVDFLLGCLVMPYSM) threads the bilayer. The Extracellular segment spans residues 82-96 (VRSAEHCWYFGEVFC). The chain crosses the membrane as a helical span at residues 97–119 (KIHTSTDIMLSSASIFHLSFISI). 2-phenylethylamine is bound at residue aspartate 103. Residues 120-139 (DRYYAVCDPLRYKAKMNILV) lie on the Cytoplasmic side of the membrane. Residues 140–161 (ICVMIFISWSVPAVFAFGMIFL) form a helical membrane-spanning segment. Residues 162-188 (ELNFKGAEEIYYKHVHCRGGCSVFFSK) are Extracellular-facing. The extracellular Loop 2 (ECL2) stretch occupies residues 175 to 186 (HVHCRGGCSVFF). Residues 189–211 (ISGVLTFMTSFYIPGSIMLCVYY) form a helical membrane-spanning segment. Residues 212–249 (RIYLIAKEQARLISDANQKLQIGLEMKNGISQSKERKA) are Cytoplasmic-facing. Residues 250–273 (VKTLGIVMGVFLICWCPFFICTVM) form a helical membrane-spanning segment. Residues 274–286 (DPFLHYIIPPTLN) lie on the Extracellular side of the membrane. Residues 287-307 (DVLIWFGYLNSTFNPMVYAFF) form a helical membrane-spanning segment. Residues 308 to 339 (YPWFRKALKMMLFGKIFQKDSSRCKLFLELSS) lie on the Cytoplasmic side of the membrane.

This sequence belongs to the G-protein coupled receptor 1 family. Expressed at low level in both the central and peripheral nervous system. Moderately expressed in stomach. Low levels in amygdala, kidney, and lung, and small intestine. Trace amounts in cerebellum, dorsal root ganglia, hippocampus, hypothalamus, liver, medulla, pancreas, pituitary, pontine reticular formation, prostate, skeletal muscle and spleen.

The protein resides in the endomembrane system. It localises to the endoplasmic reticulum membrane. It is found in the cell membrane. Activated by SEP-363856 small molecule: IHCH-7179 acts both as an agonist activator for HTR1A and TAAR1. Functionally, intracellular G-protein coupled receptor for trace amines, which recognizes endogenous amine-containing metabolites such as beta-phenylethylamine (beta-PEA), 3-iodothyronamine (T1AM), isoamylamine (IAA), cadaverine (CAD), cyclohexylamine (CHA), p-tyramine (p-TYR), trimethylamine (TMA), octopamine and tryptamine. Also functions as a receptor for various drugs and psychoactive substances, such as amphetamine and methamphetamine. Unresponsive to classical biogenic amines, such as epinephrine and histamine and only partially activated by dopamine and serotonin. Expressed in both the central and peripheral nervous system: TAAR1 activation regulates the activity of several neurotransmitter signaling pathways by (1) decreasing the basal firing rates of the neurons involved and by (2) lowering the sensitivity of receptors to neurotransmitters. Ligand binding causes a conformation change that triggers signaling via guanine nucleotide-binding proteins (G proteins) and modulates the activity of downstream effectors. TAAR1 is coupled with different G(i)/G(o)-, G(s)- or G(q)/G(11) classes of G alpha proteins depending on the ligand. CAD-binding is coupled to G(i)/G(o) G alpha proteins and mediates inhibition of adenylate cyclase activity. T1AM- or beta-PEA-binding is coupled to G(s) G alpha proteins and mediates activation of adenylate cyclase activity. CHA- or IAA-binding is coupled to G(q)/G(11) G alpha proteins and activates phospholipase C-beta, releasing diacylglycerol (DAG) and inositol 1,4,5-trisphosphate (IP3) second messengers. TMA-binding is coupled with all three G(i)/G(o)-, G(s)- or G(q)/G(11) G alpha protein subtypes. Amphetamine-binding is coupled with G(s)- or G(12)/G(13) G alpha protein subtypes. This Homo sapiens (Human) protein is Trace amine-associated receptor 1.